We begin with the raw amino-acid sequence, 476 residues long: Aspartyl/glutamyl-tRNA(Asn/Gln) amidotransferase subunit B (476 aa).

Belongs to the GatB/GatE family. GatB subfamily. As to quaternary structure, heterotrimer of A, B and C subunits.

The catalysed reaction is L-glutamyl-tRNA(Gln) + L-glutamine + ATP + H2O = L-glutaminyl-tRNA(Gln) + L-glutamate + ADP + phosphate + H(+). The enzyme catalyses L-aspartyl-tRNA(Asn) + L-glutamine + ATP + H2O = L-asparaginyl-tRNA(Asn) + L-glutamate + ADP + phosphate + 2 H(+). In terms of biological role, allows the formation of correctly charged Asn-tRNA(Asn) or Gln-tRNA(Gln) through the transamidation of misacylated Asp-tRNA(Asn) or Glu-tRNA(Gln) in organisms which lack either or both of asparaginyl-tRNA or glutaminyl-tRNA synthetases. The reaction takes place in the presence of glutamine and ATP through an activated phospho-Asp-tRNA(Asn) or phospho-Glu-tRNA(Gln). This Neisseria meningitidis serogroup C / serotype 2a (strain ATCC 700532 / DSM 15464 / FAM18) protein is Aspartyl/glutamyl-tRNA(Asn/Gln) amidotransferase subunit B.